The chain runs to 237 residues: Leucyl/phenylalanyl-tRNA--protein transferase (237 aa).

It belongs to the L/F-transferase family.

It localises to the cytoplasm. The enzyme catalyses N-terminal L-lysyl-[protein] + L-leucyl-tRNA(Leu) = N-terminal L-leucyl-L-lysyl-[protein] + tRNA(Leu) + H(+). It catalyses the reaction N-terminal L-arginyl-[protein] + L-leucyl-tRNA(Leu) = N-terminal L-leucyl-L-arginyl-[protein] + tRNA(Leu) + H(+). The catalysed reaction is L-phenylalanyl-tRNA(Phe) + an N-terminal L-alpha-aminoacyl-[protein] = an N-terminal L-phenylalanyl-L-alpha-aminoacyl-[protein] + tRNA(Phe). Functions in the N-end rule pathway of protein degradation where it conjugates Leu, Phe and, less efficiently, Met from aminoacyl-tRNAs to the N-termini of proteins containing an N-terminal arginine or lysine. The polypeptide is Leucyl/phenylalanyl-tRNA--protein transferase (Shewanella baltica (strain OS155 / ATCC BAA-1091)).